The chain runs to 545 residues: Tripartite motif-containing protein 55 (545 aa).

An RING-type zinc finger spans residues 26–82; that stretch reads CPICLEMFTKPVVILPCQHNLCRKCASDIFQASNPYLPTRGGTTVASGGRFRCPSCR. A B box-type zinc finger spans residues 119-161; that stretch reads LDQPMCEEHEEERINIYCLNCEVPTCSLCKVFGAHKDCQVAPL. Zn(2+)-binding residues include cysteine 124, histidine 127, cysteine 147, and histidine 153. Positions 219–258 form a coiled coil; sequence YSILEERKTEMTQAITRTQEEKLEHVRTLIRKYSDHLENV. One can recognise a COS domain in the interval 269 to 327; it reads MDEPEMAVFLQNAKTLLQKITEASKAFQMEKIEQGYEIMNNFTVNLNREEKIIREIDFS. Disordered stretches follow at residues 324 to 378 and 406 to 528; these read IDFS…SELA and LVTQ…GADS. The span at 328–355 shows a compositional bias: acidic residues; it reads REEEDEDDEGEVDEEGEGEDAVEVEEAE. Composition is skewed to low complexity over residues 417–426 and 469–493; these read SQQTTQSETS and SAAE…AAVS. Residues 495–506 are compositionally biased toward polar residues; the sequence is KESSSTAATSQI. A compositionally biased stretch (low complexity) spans 510–520; the sequence is ASSPQGQAAAL.

In terms of assembly, homooligomer and heterooligomer. Interacts with titin/TTN. Interacts with myosins. Interacts with SQSTM1 and NBR1. Probably interacts with TRIM63 and TRIM54. Post-translationally, targeted for degradation through the proteasomal and lysosomal pathways in the presence of SUMO3.

Its subcellular location is the nucleus. The protein localises to the cytoplasm. It catalyses the reaction S-ubiquitinyl-[E2 ubiquitin-conjugating enzyme]-L-cysteine + [acceptor protein]-L-lysine = [E2 ubiquitin-conjugating enzyme]-L-cysteine + N(6)-ubiquitinyl-[acceptor protein]-L-lysine.. Its function is as follows. E3 ubiquitin ligase that plays an important role in regulating cardiac development and contractility, muscle growth, metabolism, and fiber-type differentiation. Acts as a critical factor that regulates cardiomyocyte size during development in concert with TRIM63 by regulating E2F1-mediated gene expression. Plays a role in apoptosis induction in cardiomyocytes by promoting ubiquitination of the DUSP1 phosphatase. Promotes non-canonical NF-kappa-B signaling and B-cell-mediated immune responses by mediating NFKB2 'Lys-48'-linked ubiquitination and processing. In turn, NFKB2 is further processed by valosin-containing protein/VCP, an ATPase that mediates ubiquitin-dependent protein degradation by the proteasome. May play a role in preventing macrophages from producing inflammatory factors and migrating by downregulating the level of nuclear NF-kappa-B subunit RELA. Also modifies PPARG via polyubiquitination and accelerates PPARG proteasomal degradation to inhibit its activity. This chain is Tripartite motif-containing protein 55 (Trim55), found in Rattus norvegicus (Rat).